The following is a 316-amino-acid chain: ATP synthase gamma chain (316 aa).

It belongs to the ATPase gamma chain family. F-type ATPases have 2 components, CF(1) - the catalytic core - and CF(0) - the membrane proton channel. CF(1) has five subunits: alpha(3), beta(3), gamma(1), delta(1), epsilon(1). CF(0) has three main subunits: a, b and c.

It is found in the cellular thylakoid membrane. Produces ATP from ADP in the presence of a proton gradient across the membrane. The gamma chain is believed to be important in regulating ATPase activity and the flow of protons through the CF(0) complex. In Prochlorococcus marinus (strain NATL2A), this protein is ATP synthase gamma chain.